Here is a 381-residue protein sequence, read N- to C-terminus: L-lactate dehydrogenase (381 aa).

The FMN hydroxy acid dehydrogenase domain maps to 1-380 (MIISASTDYR…NRDSLAVSER (380 aa)). Tyrosine 24 is a binding site for substrate. Residues serine 106 and glutamine 127 each contribute to the FMN site. Tyrosine 129 is a substrate binding site. Threonine 155 serves as a coordination point for FMN. Arginine 164 provides a ligand contact to substrate. Lysine 251 is a binding site for FMN. The active-site Proton acceptor is the histidine 275. Position 278 (arginine 278) interacts with substrate. 306–330 (DSGIRTGLDVVRMIALGADSVLLGR) provides a ligand contact to FMN.

It belongs to the FMN-dependent alpha-hydroxy acid dehydrogenase family. FMN is required as a cofactor.

It localises to the cell inner membrane. It catalyses the reaction (S)-lactate + A = pyruvate + AH2. Functionally, catalyzes the conversion of L-lactate to pyruvate. Is coupled to the respiratory chain. The protein is L-lactate dehydrogenase of Yersinia pseudotuberculosis serotype O:1b (strain IP 31758).